The sequence spans 1347 residues: Protein dispatched homolog 3 (1347 aa).

The Cytoplasmic segment spans residues 1 to 67 (MDSEDDPLLQ…LGWAFTNPCC (67 aa)). The chain crosses the membrane as a helical span at residues 68 to 88 (AGLVLFLGCSIPMVLSAFMFL). At 89 to 417 (YYPPLDIDIS…YEVRRTFNND (329 aa)) the chain is on the lumenal side. Residues 156 to 207 (GNHSRPASRAPRSAPRDTVATQTSAANSSERRRREAPSPEGQVTNQSRARRG) form a disordered region. Residue Asn157 is glycosylated (N-linked (GlcNAc...) asparagine). The span at 159 to 168 (SRPASRAPRS) shows a compositional bias: low complexity. The region spanning 412–570 (RTFNNDMLLA…LFTMPAALGL (159 aa)) is the SSD domain. A helical transmembrane segment spans residues 418–438 (MLLAFISSSCIAALVYILTSC). Position 439 (Ser439) is a topological domain, cytoplasmic. A helical transmembrane segment spans residues 440-460 (VFLSFFGIASIGLSCLVALFL). At 461–463 (YHV) the chain is on the lumenal side. Residues 464 to 484 (VFGIQYLGILNGVAAFVIVGI) form a helical membrane-spanning segment. Residues 485–528 (GVDDVFVFINTYRQATHLEDPQLRMIHTIQTAGKATFFTSLTTA) are Cytoplasmic-facing. The helical transmembrane segment at 529–549 (AAYAANVFSQIPAVHDFGLFM) threads the bilayer. Residue Ser550 is a topological domain, lumenal. The chain crosses the membrane as a helical span at residues 551–571 (LIVTCCWLAVLFTMPAALGLW). At 572–684 (SLYMAPLESS…WVLWAAVKSR (113 aa)) the chain is on the cytoplasmic side. A helical transmembrane segment spans residues 685–705 (WVIVGLFASILILSLVFASRL). At 706–1137 (RPASRAPLLF…IFMEIIGVQS (432 aa)) the chain is on the lumenal side. An N-linked (GlcNAc...) asparagine glycan is attached at Asn976. Residues 1138-1158 (ALYGLVLSLLICVAAVAVFTT) traverse the membrane as a helical segment. Residue His1159 is a topological domain, cytoplasmic. A helical transmembrane segment spans residues 1160 to 1180 (VLLLLPVLLSILGIVCLVVTI). Residues 1181–1246 (MYWSGWEMGA…TLEAVRHVGV (66 aa)) are Lumenal-facing. The helical transmembrane segment at 1247-1267 (AIVSSALTTVIATVPLFFCII) threads the bilayer. At 1268-1281 (APFAKFGKIVALNT) the chain is on the cytoplasmic side. The chain crosses the membrane as a helical span at residues 1282–1302 (GVSILYTLTVSTALLGIMAPG). Residues 1303 to 1310 (SFTRTRTS) lie on the Lumenal side of the membrane. The helical transmembrane segment at 1311 to 1331 (FLKALGAVLLAGALGLGACLV) threads the bilayer. Topologically, residues 1332–1347 (LLRSGYKIPLPSGATL) are cytoplasmic.

This sequence belongs to the patched family. Expressed in brain, retina, testis and thymus.

Its subcellular location is the endoplasmic reticulum membrane. It localises to the nucleus membrane. The protein resides in the cytoplasmic vesicle membrane. Its function is as follows. Plays a role in neuronal proliferation and differentiation. Plays a role in the accumulation of cellular cholesterol. Involved in intracellular lipid droplet formation. May contribute to cholesterol homeostasis in neuronal cells. This is Protein dispatched homolog 3 from Mus musculus (Mouse).